Reading from the N-terminus, the 459-residue chain is Cysteine--tRNA ligase (459 aa).

Position 31 (Cys-31) interacts with Zn(2+). Positions 33-43 (PTVYYNPHIGN) match the 'HIGH' region motif. Residues Cys-216, His-241, and Glu-245 each coordinate Zn(2+). The short motif at 274 to 278 (KMSKS) is the 'KMSKS' region element. Lys-277 serves as a coordination point for ATP.

This sequence belongs to the class-I aminoacyl-tRNA synthetase family. As to quaternary structure, monomer. It depends on Zn(2+) as a cofactor.

The protein resides in the cytoplasm. It carries out the reaction tRNA(Cys) + L-cysteine + ATP = L-cysteinyl-tRNA(Cys) + AMP + diphosphate. The chain is Cysteine--tRNA ligase from Rickettsia conorii (strain ATCC VR-613 / Malish 7).